A 96-amino-acid polypeptide reads, in one-letter code: MAKYEILYIIRPNIEEEAKNALVSRFDSILTDNGATIVESKDWEKRRLAYEINDFREGLYHIVNVESEDAVALNEFDRLAKINGDILRHMIVKLDA.

It belongs to the bacterial ribosomal protein bS6 family.

Binds together with bS18 to 16S ribosomal RNA. The protein is Small ribosomal subunit protein bS6 of Streptococcus uberis (strain ATCC BAA-854 / 0140J).